A 343-amino-acid polypeptide reads, in one-letter code: Ribosomal RNA small subunit methyltransferase C (343 aa).

The protein belongs to the methyltransferase superfamily. RsmC family. As to quaternary structure, monomer.

The protein localises to the cytoplasm. It catalyses the reaction guanosine(1207) in 16S rRNA + S-adenosyl-L-methionine = N(2)-methylguanosine(1207) in 16S rRNA + S-adenosyl-L-homocysteine + H(+). Functionally, specifically methylates the guanine in position 1207 of 16S rRNA in the 30S particle. The polypeptide is Ribosomal RNA small subunit methyltransferase C (Shigella boydii serotype 4 (strain Sb227)).